The primary structure comprises 326 residues: MVLNVYCCFFQISDIQTMKINQTILKEFILVGFSVYPHVQTFLFVVFFCLYLLTLAGNLIIMGLTWVDRSLHTPMYLFLSALSFSETCYTLTIVPKMLEDLLAKDRSISVTGCSLQMCFFLGLGGTNCIILTLMGYDRFLAICNPLRYPLLMTNIVCGQLVASACTAGFFISLTETALIFRDSFCRPNLVKHFFCHMLAVIRLSCIDSNHTEFIITLISVSGLLGTLLLIILTDVFIISTVLRIPSAEGKQKAFTTCASHLTVVIIHFGFASIVYLKPEASGDDTLIAVPYTVITPFLSPIIFSLRNKDMKNAFRRMMGNTVALKK.

Over 1 to 41 (MVLNVYCCFFQISDIQTMKINQTILKEFILVGFSVYPHVQT) the chain is Extracellular. A glycan (N-linked (GlcNAc...) asparagine) is linked at Asn21. The helical transmembrane segment at 42-62 (FLFVVFFCLYLLTLAGNLIIM) threads the bilayer. The Cytoplasmic segment spans residues 63–70 (GLTWVDRS). A helical membrane pass occupies residues 71–91 (LHTPMYLFLSALSFSETCYTL). Residues 92–115 (TIVPKMLEDLLAKDRSISVTGCSL) lie on the Extracellular side of the membrane. Cys113 and Cys205 are disulfide-bonded. Residues 116–136 (QMCFFLGLGGTNCIILTLMGY) form a helical membrane-spanning segment. Residues 137-155 (DRFLAICNPLRYPLLMTNI) are Cytoplasmic-facing. A helical transmembrane segment spans residues 156 to 176 (VCGQLVASACTAGFFISLTET). Topologically, residues 177–213 (ALIFRDSFCRPNLVKHFFCHMLAVIRLSCIDSNHTEF) are extracellular. N-linked (GlcNAc...) asparagine glycosylation occurs at Asn209. The chain crosses the membrane as a helical span at residues 214 to 233 (IITLISVSGLLGTLLLIILT). Residues 234-253 (DVFIISTVLRIPSAEGKQKA) lie on the Cytoplasmic side of the membrane. The helical transmembrane segment at 254–274 (FTTCASHLTVVIIHFGFASIV) threads the bilayer. Residues 275–284 (YLKPEASGDD) lie on the Extracellular side of the membrane. A helical membrane pass occupies residues 285 to 305 (TLIAVPYTVITPFLSPIIFSL). The Cytoplasmic segment spans residues 306-326 (RNKDMKNAFRRMMGNTVALKK).

It belongs to the G-protein coupled receptor 1 family.

Its subcellular location is the cell membrane. In terms of biological role, odorant receptor. The sequence is that of Olfactory receptor 10X1 (OR10X1) from Homo sapiens (Human).